A 204-amino-acid polypeptide reads, in one-letter code: MIGILDYGVGNLKAFANVLKGLNFHHQIVKTEQELKGCEKIIMPGVGSFDSVMNKLIESGIRDVLSDLIINKKIPILGVCVGMQILASSSEEGSKSGLGWIRGRVKKFNFDRSDFSLTIPQIGWNEVNSTKENTLLKNLEKNPRFYFLHSYYIECEDKKDVIAIANYGGDFTCAVNRENIYGTQFHPEKSHHNGVALIRNFASL.

One can recognise a Glutamine amidotransferase type-1 domain in the interval 1 to 204 (MIGILDYGVG…VALIRNFASL (204 aa)). The active-site Nucleophile is Cys80. Catalysis depends on residues His186 and Glu188.

As to quaternary structure, heterodimer of HisH and HisF.

It is found in the cytoplasm. It catalyses the reaction 5-[(5-phospho-1-deoxy-D-ribulos-1-ylimino)methylamino]-1-(5-phospho-beta-D-ribosyl)imidazole-4-carboxamide + L-glutamine = D-erythro-1-(imidazol-4-yl)glycerol 3-phosphate + 5-amino-1-(5-phospho-beta-D-ribosyl)imidazole-4-carboxamide + L-glutamate + H(+). The catalysed reaction is L-glutamine + H2O = L-glutamate + NH4(+). It functions in the pathway amino-acid biosynthesis; L-histidine biosynthesis; L-histidine from 5-phospho-alpha-D-ribose 1-diphosphate: step 5/9. IGPS catalyzes the conversion of PRFAR and glutamine to IGP, AICAR and glutamate. The HisH subunit catalyzes the hydrolysis of glutamine to glutamate and ammonia as part of the synthesis of IGP and AICAR. The resulting ammonia molecule is channeled to the active site of HisF. This is Imidazole glycerol phosphate synthase subunit HisH (hisH) from Leptospira borgpetersenii.